The following is a 104-amino-acid chain: NADH-quinone oxidoreductase subunit K (104 aa).

3 consecutive transmembrane segments (helical) span residues valine 4–alanine 24, valine 31–phenylalanine 51, and isoleucine 64–leucine 84.

This sequence belongs to the complex I subunit 4L family. NDH-1 is composed of 14 different subunits. Subunits NuoA, H, J, K, L, M, N constitute the membrane sector of the complex.

It is found in the cell membrane. The enzyme catalyses a quinone + NADH + 5 H(+)(in) = a quinol + NAD(+) + 4 H(+)(out). In terms of biological role, NDH-1 shuttles electrons from NADH, via FMN and iron-sulfur (Fe-S) centers, to quinones in the respiratory chain. The immediate electron acceptor for the enzyme in this species is believed to be a menaquinone. Couples the redox reaction to proton translocation (for every two electrons transferred, four hydrogen ions are translocated across the cytoplasmic membrane), and thus conserves the redox energy in a proton gradient. This chain is NADH-quinone oxidoreductase subunit K, found in Geobacillus sp. (strain WCH70).